The primary structure comprises 293 residues: 16S rRNA (guanine(1405)-N(7))-methyltransferase (293 aa).

Residues Phe-47, 80-82 (HAS), Arg-86, Ala-111, Asp-134, 160-161 (DL), Leu-176, and Gln-185 each bind S-adenosyl-L-methionine. Positions 258 to 274 (GRPAPAEGAAEPGATRP) are enriched in low complexity. The interval 258 to 293 (GRPAPAEGAAEPGATRPVVDVPATARPDADRVDPTG) is disordered. Residues 284 to 293 (PDADRVDPTG) are compositionally biased toward basic and acidic residues.

Belongs to the methyltransferase superfamily. Aminoglycoside resistance family.

It catalyses the reaction guanosine(1405) in 16S rRNA + S-adenosyl-L-methionine = N(7)-methylguanosine(1405) in 16S rRNA + S-adenosyl-L-homocysteine. In terms of biological role, specifically methylates the N(7) position of guanine 1405 in 16S rRNA. Confers resistance to aminoglycosides. The sequence is that of 16S rRNA (guanine(1405)-N(7))-methyltransferase (fmrO) from Micromonospora olivasterospora.